The primary structure comprises 113 residues: T cell receptor alpha variable 8-3 (113 aa).

The N-terminal stretch at 1–20 is a signal peptide; the sequence is MLLELIPLLGIHFVLRTARA. An Ig-like domain is found at 21–113; that stretch reads QSVTQPDIHI…DAAEYFCAVG (93 aa). C42 and C110 are disulfide-bonded. An N-linked (GlcNAc...) asparagine glycan is attached at N43.

Alpha-beta TR is a heterodimer composed of an alpha and beta chain; disulfide-linked. The alpha-beta TR is associated with the transmembrane signaling CD3 coreceptor proteins to form the TR-CD3 (TcR or TCR). The assembly of alpha-beta TR heterodimers with CD3 occurs in the endoplasmic reticulum where a single alpha-beta TR heterodimer associates with one CD3D-CD3E heterodimer, one CD3G-CD3E heterodimer and one CD247 homodimer forming a stable octameric structure. CD3D-CD3E and CD3G-CD3E heterodimers preferentially associate with TR alpha and TR beta chains, respectively. The association of the CD247 homodimer is the last step of TcR assembly in the endoplasmic reticulum and is required for transport to the cell surface.

It localises to the cell membrane. Functionally, v region of the variable domain of T cell receptor (TR) alpha chain that participates in the antigen recognition. Alpha-beta T cell receptors are antigen specific receptors which are essential to the immune response and are present on the cell surface of T lymphocytes. Recognize peptide-major histocompatibility (MH) (pMH) complexes that are displayed by antigen presenting cells (APC), a prerequisite for efficient T cell adaptive immunity against pathogens. Binding of alpha-beta TR to pMH complex initiates TR-CD3 clustering on the cell surface and intracellular activation of LCK that phosphorylates the ITAM motifs of CD3G, CD3D, CD3E and CD247 enabling the recruitment of ZAP70. In turn ZAP70 phosphorylates LAT, which recruits numerous signaling molecules to form the LAT signalosome. The LAT signalosome propagates signal branching to three major signaling pathways, the calcium, the mitogen-activated protein kinase (MAPK) kinase and the nuclear factor NF-kappa-B (NF-kB) pathways, leading to the mobilization of transcription factors that are critical for gene expression and essential for T cell growth and differentiation. The T cell repertoire is generated in the thymus, by V-(D)-J rearrangement. This repertoire is then shaped by intrathymic selection events to generate a peripheral T cell pool of self-MH restricted, non-autoaggressive T cells. Post-thymic interaction of alpha-beta TR with the pMH complexes shapes TR structural and functional avidity. The sequence is that of T cell receptor alpha variable 8-3 from Homo sapiens (Human).